The sequence spans 345 residues: Glycosyltransferase 1 domain-containing protein 1 (345 aa).

Residues 1–19 (MKILFLACLRAHTGNSTTA) form the signal peptide. N-linked (GlcNAc...) asparagine glycans are attached at residues N246 and N322.

This sequence belongs to the glycosyltransferase group 1 family. Glycosyltransferase 4 subfamily.

The protein localises to the secreted. In Xenopus tropicalis (Western clawed frog), this protein is Glycosyltransferase 1 domain-containing protein 1 (glt1d1).